A 158-amino-acid polypeptide reads, in one-letter code: Rhombotin-2 (158 aa).

LIM zinc-binding domains are found at residues 30 to 89 (CGGC…RLFG) and 94 to 153 (CASC…EWTK).

Interacts via its LIM domains with ELF2 and LDB1. Also interacts with basic helix-loop-helix protein TAL1/SCL and can assemble in a complex with LMO2 and TAL1/SCL. Interacts with BEX2 and KDM5A.

It localises to the nucleus. In terms of biological role, acts with TAL1/SCL to regulate red blood cell development. Also acts with LDB1 to maintain erythroid precursors in an immature state. The sequence is that of Rhombotin-2 (LMO2) from Homo sapiens (Human).